The primary structure comprises 121 residues: Small ribosomal subunit protein uS13 (121 aa).

Residues 94 to 121 (GLPVRGQNTKNNSRTRKGPRRTVANKKK) are disordered. The segment covering 106-121 (SRTRKGPRRTVANKKK) has biased composition (basic residues).

This sequence belongs to the universal ribosomal protein uS13 family. As to quaternary structure, part of the 30S ribosomal subunit. Forms a loose heterodimer with protein S19. Forms two bridges to the 50S subunit in the 70S ribosome.

Located at the top of the head of the 30S subunit, it contacts several helices of the 16S rRNA. In the 70S ribosome it contacts the 23S rRNA (bridge B1a) and protein L5 of the 50S subunit (bridge B1b), connecting the 2 subunits; these bridges are implicated in subunit movement. Contacts the tRNAs in the A and P-sites. The chain is Small ribosomal subunit protein uS13 from Exiguobacterium sibiricum (strain DSM 17290 / CCUG 55495 / CIP 109462 / JCM 13490 / 255-15).